A 450-amino-acid chain; its full sequence is Phosphomethylpyrimidine synthase (450 aa).

Substrate is bound by residues Asn80, Met109, Tyr138, His173, 193–195, 234–237, and Glu273; these read SRG and DSLR. His277 contacts Zn(2+). Tyr300 provides a ligand contact to substrate. Residue His341 participates in Zn(2+) binding. Residues Cys421, Cys424, and Cys429 each coordinate [4Fe-4S] cluster.

This sequence belongs to the ThiC family. Homodimer. The cofactor is [4Fe-4S] cluster.

It catalyses the reaction 5-amino-1-(5-phospho-beta-D-ribosyl)imidazole + S-adenosyl-L-methionine = 4-amino-2-methyl-5-(phosphooxymethyl)pyrimidine + CO + 5'-deoxyadenosine + formate + L-methionine + 3 H(+). The protein operates within cofactor biosynthesis; thiamine diphosphate biosynthesis. Catalyzes the synthesis of the hydroxymethylpyrimidine phosphate (HMP-P) moiety of thiamine from aminoimidazole ribotide (AIR) in a radical S-adenosyl-L-methionine (SAM)-dependent reaction. In Campylobacter fetus subsp. fetus (strain 82-40), this protein is Phosphomethylpyrimidine synthase.